A 744-amino-acid chain; its full sequence is MASEATHIPSPVVRQIDKQFLICSICLERYKNPKVLPCLHTFCERCLQNYIPAHSLTLSCPVCRQTSILPEKGVAALQNNFFITNLMDVLQRTPGSNVEESSILETVTAVAAGKPLSCPNHDGNVMDFYCQSCETAMCRECTEGEHAEHPTVPLKDVVEQHKASLQVQLDAVNKRLPEIDSALQFISEIIHQLTNQKASIVDDIHSTFDELQKTLNVRKSVLLMELEVNYGLKHKVLQSQLDTLLEGQESIKSCSNFTAQALNHGTETEVLLVKKQMSEKLNELADQDFPLHPRENDQLDFIVETEGLKKSIHNLGTILTTNAVASETVATGEGLRQTIIGQPMSVTITTKDKDGELCKTGNAYITAELSTPDGSVADGEILDNKNGTYEFLYTVQKEGDFTLSLRLYDQHIRGSPFKLKVIRSADVSPTTEGVKRRVKSPGSGHVKQKAVKRPASMYSTGKRKENPIEDDLIFRVGTKGRNKGEFTNLQGVAASTSGKILIADSNNQCVQIFSNDGQFKSRFGIRGRSPGQLQRPTGVAVHPSGDIIIADYDNKWVSIFSSDGKFKTKIGSGKLMGPKGVSVDRNGHIIVVDNKACCVFIFQPNGKIVTRFGSRGNGDRQFAGPHFAAVNSNNEIIVTDFHNHSVKVFNQEGEFMLKFGSNGEGNGQFNAPTGVAVDSNGNIIVADWGNSRIQVFDGSGSFLSYINTSADPLYGPQGLALTSDGHVVVADSGNHCFKVYRYLQ.

A Phosphoserine modification is found at Ser-10. Residues 23-64 (CSICLERYKNPKVLPCLHTFCERCLQNYIPAHSLTLSCPVCR) form an RING-type zinc finger. Residues 113–154 (GKPLSCPNHDGNVMDFYCQSCETAMCRECTEGEHAEHPTVPL) form a B box-type zinc finger. 4 residues coordinate Zn(2+): Cys-118, His-121, Cys-141, and His-146. One copy of the Filamin repeat lies at 320–421 (TTNAVASETV…IRGSPFKLKV (102 aa)). Thr-371 carries the post-translational modification Phosphothreonine. Ser-375, Ser-424, and Ser-428 each carry phosphoserine. The segment at 432–462 (EGVKRRVKSPGSGHVKQKAVKRPASMYSTGK) is disordered. 6 NHL repeats span residues 473-516 (IFRV…FSND), 520-563 (KSRF…FSSD), 564-605 (GKFK…FQPN), 609-652 (VTRF…FNQE), 656-699 (MLKF…FDGS), and 700-743 (GSFL…YRYL).

The protein belongs to the TRIM/RBCC family. Forms homooligomers. Interacts with TRIM3; this interaction reduces TRIM2 activity. Interacts with myosin V; myosin V may not be a substrate for ubiquitination. Interacts with NEFL. Interacts with phosphorylated BCL2L11. Interacts with SIRPA. Post-translationally, RING-type zinc finger-dependent and UBE2D1-dependent autoubiquitination.

It is found in the cytoplasm. It catalyses the reaction S-ubiquitinyl-[E2 ubiquitin-conjugating enzyme]-L-cysteine + [acceptor protein]-L-lysine = [E2 ubiquitin-conjugating enzyme]-L-cysteine + N(6)-ubiquitinyl-[acceptor protein]-L-lysine.. It participates in protein modification; protein ubiquitination. UBE2D1-dependent E3 ubiquitin-protein ligase that mediates the ubiquitination of NEFL and of phosphorylated BCL2L11. Plays a neuroprotective function. May play a role in neuronal rapid ischemic tolerance. Plays a role in antiviral immunity and limits New World arenavirus infection independently of its ubiquitin ligase activity. This chain is Tripartite motif-containing protein 2 (TRIM2), found in Ailuropoda melanoleuca (Giant panda).